The sequence spans 212 residues: Metalloproteinase inhibitor 3 (212 aa).

The N-terminal stretch at 1–24 is a signal peptide; that stretch reads MTAWLGFLAVFLCSWSLRDLVAEA. Cys25 serves as a coordination point for Zn(2+). 2 involved in metalloproteinase-binding regions span residues 25–28 and 89–90; these read CTCV and ES. 6 disulfide bridges follow: Cys25–Cys92, Cys27–Cys119, Cys37–Cys144, Cys146–Cys193, Cys151–Cys156, and Cys164–Cys185. One can recognise an NTR domain in the interval 25–144; it reads CTCVPIHPQD…GLNHRYHLGC (120 aa).

Belongs to the protease inhibitor I35 (TIMP) family.

Its subcellular location is the secreted. The protein localises to the extracellular space. The protein resides in the extracellular matrix. Complexes with metalloproteinases (such as collagenases) and irreversibly inactivates them by binding to their catalytic zinc cofactor. May form part of a tissue-specific acute response to remodeling stimuli. This chain is Metalloproteinase inhibitor 3 (TIMP3), found in Gallus gallus (Chicken).